An 801-amino-acid polypeptide reads, in one-letter code: Probable inorganic carbon transporter subunit DabA (801 aa).

Residues cysteine 332, aspartate 334, histidine 500, and cysteine 515 each contribute to the Zn(2+) site.

It belongs to the inorganic carbon transporter (TC 9.A.2) DabA family. As to quaternary structure, forms a complex with DabB. It depends on Zn(2+) as a cofactor.

Its subcellular location is the cell inner membrane. Part of an energy-coupled inorganic carbon pump. In Marinobacter nauticus (strain ATCC 700491 / DSM 11845 / VT8) (Marinobacter aquaeolei), this protein is Probable inorganic carbon transporter subunit DabA.